Consider the following 84-residue polypeptide: Large ribosomal subunit protein bL27 (84 aa).

A disordered region spans residues 1 to 20 (MAHKKAGGSTRNGRDSHSKR).

It belongs to the bacterial ribosomal protein bL27 family.

The sequence is that of Large ribosomal subunit protein bL27 from Blochmanniella pennsylvanica (strain BPEN).